The sequence spans 287 residues: Phosphatidylserine decarboxylase proenzyme (287 aa).

Residues Asp-90, His-147, and Ser-252 each act as charge relay system; for autoendoproteolytic cleavage activity in the active site. The active-site Schiff-base intermediate with substrate; via pyruvic acid; for decarboxylase activity is Ser-252. Residue Ser-252 is modified to Pyruvic acid (Ser); by autocatalysis.

This sequence belongs to the phosphatidylserine decarboxylase family. PSD-B subfamily. Prokaryotic type I sub-subfamily. In terms of assembly, heterodimer of a large membrane-associated beta subunit and a small pyruvoyl-containing alpha subunit. The cofactor is pyruvate. Is synthesized initially as an inactive proenzyme. Formation of the active enzyme involves a self-maturation process in which the active site pyruvoyl group is generated from an internal serine residue via an autocatalytic post-translational modification. Two non-identical subunits are generated from the proenzyme in this reaction, and the pyruvate is formed at the N-terminus of the alpha chain, which is derived from the carboxyl end of the proenzyme. The autoendoproteolytic cleavage occurs by a canonical serine protease mechanism, in which the side chain hydroxyl group of the serine supplies its oxygen atom to form the C-terminus of the beta chain, while the remainder of the serine residue undergoes an oxidative deamination to produce ammonia and the pyruvoyl prosthetic group on the alpha chain. During this reaction, the Ser that is part of the protease active site of the proenzyme becomes the pyruvoyl prosthetic group, which constitutes an essential element of the active site of the mature decarboxylase.

It is found in the cell membrane. The catalysed reaction is a 1,2-diacyl-sn-glycero-3-phospho-L-serine + H(+) = a 1,2-diacyl-sn-glycero-3-phosphoethanolamine + CO2. It functions in the pathway phospholipid metabolism; phosphatidylethanolamine biosynthesis; phosphatidylethanolamine from CDP-diacylglycerol: step 2/2. Functionally, catalyzes the formation of phosphatidylethanolamine (PtdEtn) from phosphatidylserine (PtdSer). The polypeptide is Phosphatidylserine decarboxylase proenzyme (Pseudomonas putida (strain W619)).